A 326-amino-acid chain; its full sequence is DnaJ homolog subfamily B member 6 (326 aa).

In terms of domain architecture, J spans 2–69; sequence VDYYEVLGVQ…KKRDIYDKYG (68 aa). An interaction with HSP70 region spans residues 2–146; it reads VDYYEVLGVQ…TGSFFSAFSG (145 aa). The segment at 119–242 is interaction with KRT18; sequence FEDFFGNRRG…ADDDALAEER (124 aa). Arg-135 carries the post-translational modification Omega-N-methylarginine. The interval 249 to 326 is disordered; the sequence is ALPAQPAGLR…KKKKSTKGNH (78 aa). A Phosphoserine modification is found at Ser-277.

As to quaternary structure, homooligomer. Interacts with BAG3, HSPB8 and STUB1. Interacts with ALKBH1. Interacts with HSP70, KRT18 and PTTG.

Its subcellular location is the cytoplasm. The protein resides in the perinuclear region. The protein localises to the nucleus. It is found in the myofibril. It localises to the sarcomere. Its subcellular location is the z line. Has a stimulatory effect on the ATPase activity of HSP70 in a dose-dependent and time-dependent manner and hence acts as a co-chaperone of HSP70. Plays an indispensable role in the organization of KRT8/KRT18 filaments. Acts as an endogenous molecular chaperone for neuronal proteins including huntingtin. Suppresses aggregation and toxicity of polyglutamine-containing, aggregation-prone proteins. Also reduces cellular toxicity and caspase-3 activity. The chain is DnaJ homolog subfamily B member 6 (DNAJB6) from Pongo abelii (Sumatran orangutan).